The chain runs to 118 residues: Non-specific lipid-transfer protein A (118 aa).

Residues M1–R25 form the signal peptide. 4 disulfides stabilise this stretch: C29/C76, C39/C53, C54/C100, and C74/C114.

This sequence belongs to the plant LTP family.

Its function is as follows. Plant non-specific lipid-transfer proteins transfer phospholipids as well as galactolipids across membranes. May play a role in wax or cutin deposition in the cell walls of expanding epidermal cells and certain secretory tissues. This is Non-specific lipid-transfer protein A (WAX9A) from Brassica oleracea var. italica (Broccoli).